A 104-amino-acid chain; its full sequence is Protein RnfH (104 aa).

It belongs to the UPF0125 (RnfH) family.

The protein is Protein RnfH of Pseudomonas syringae pv. syringae (strain B728a).